The chain runs to 152 residues: Ribosome maturation factor RimP (152 aa).

Belongs to the RimP family.

The protein localises to the cytoplasm. Its function is as follows. Required for maturation of 30S ribosomal subunits. The sequence is that of Ribosome maturation factor RimP from Yersinia enterocolitica serotype O:8 / biotype 1B (strain NCTC 13174 / 8081).